An 84-amino-acid chain; its full sequence is Exodeoxyribonuclease 7 small subunit (84 aa).

This sequence belongs to the XseB family. Heterooligomer composed of large and small subunits.

Its subcellular location is the cytoplasm. The enzyme catalyses Exonucleolytic cleavage in either 5'- to 3'- or 3'- to 5'-direction to yield nucleoside 5'-phosphates.. In terms of biological role, bidirectionally degrades single-stranded DNA into large acid-insoluble oligonucleotides, which are then degraded further into small acid-soluble oligonucleotides. The chain is Exodeoxyribonuclease 7 small subunit from Yersinia pseudotuberculosis serotype O:3 (strain YPIII).